The following is a 406-amino-acid chain: MKRAFILVLDSFGIGAAADAEQFGDVGSDTLGHIADQCEQGLANNDKREGALRLPNLSKLGLAMAHKESTGRFAPGLDADAEIIGAYGHAAELSSGKDTPSGHWEIAGVPVLFDWGYFTDKANSFPKELTDRILERAGLDGFLGNCHASGTQVLDDLGEEHMKTGKPIFYTSADSVFQIACHEETFGLDRLLELCQIAREELEDYNIGRVIARPFVGAGKGQFERTGNRRDLSVEPPSATVLQKLVEEKQGDVVSIGKIADIYANCGITKKVKATGIPALFEATLEQIKEAGDNTIVFTNFVDFDSAYGHRRDVAGYAAALEYFDGRINEVLEIMEEDDVLILTADHGCDPTWPGTDHTREHIPVIVYGKRVPAGSLGRRDSFADIGQTLATYFGTSPMDYGKNFL.

Mn(2+) is bound by residues D10, D305, H310, D346, H347, and H358.

Belongs to the phosphopentomutase family. The cofactor is Mn(2+).

The protein localises to the cytoplasm. The enzyme catalyses 2-deoxy-alpha-D-ribose 1-phosphate = 2-deoxy-D-ribose 5-phosphate. It catalyses the reaction alpha-D-ribose 1-phosphate = D-ribose 5-phosphate. It participates in carbohydrate degradation; 2-deoxy-D-ribose 1-phosphate degradation; D-glyceraldehyde 3-phosphate and acetaldehyde from 2-deoxy-alpha-D-ribose 1-phosphate: step 1/2. Functionally, isomerase that catalyzes the conversion of deoxy-ribose 1-phosphate (dRib-1-P) and ribose 1-phosphate (Rib-1-P) to deoxy-ribose 5-phosphate (dRib-5-P) and ribose 5-phosphate (Rib-5-P), respectively. This chain is Phosphopentomutase, found in Vibrio campbellii (strain ATCC BAA-1116).